Consider the following 161-residue polypeptide: Nucleotide-binding protein Sden_0770 (161 aa).

Belongs to the YajQ family.

In terms of biological role, nucleotide-binding protein. The protein is Nucleotide-binding protein Sden_0770 of Shewanella denitrificans (strain OS217 / ATCC BAA-1090 / DSM 15013).